A 229-amino-acid chain; its full sequence is Uracil-DNA glycosylase (229 aa).

Asp64 functions as the Proton acceptor in the catalytic mechanism.

The protein belongs to the uracil-DNA glycosylase (UDG) superfamily. UNG family. As to quaternary structure, monomer.

It is found in the cytoplasm. It catalyses the reaction Hydrolyzes single-stranded DNA or mismatched double-stranded DNA and polynucleotides, releasing free uracil.. In terms of biological role, excises uracil residues from the DNA which can arise as a result of misincorporation of dUMP residues by DNA polymerase or due to deamination of cytosine. The protein is Uracil-DNA glycosylase of Escherichia coli O157:H7.